We begin with the raw amino-acid sequence, 426 residues long: Dihydropyrimidine dehydrogenase (NADP(+)), chloroplastic (426 aa).

Residues 1–44 (MASMSFALNRFSGLSSKTTLSADFDPSSRRSFLPPTRVGLKISS) constitute a chloroplast transit peptide. Position 45 is an N-acetylalanine (Ala-45). Substrate is bound by residues Asn-129 and 188 to 190 (NFS). Cys-191 functions as the Nucleophile in the catalytic mechanism. 256–257 (NT) contacts substrate. A disordered region spans residues 395–414 (VEQRKAEKRGLKSDKDWTGD).

It belongs to the dihydropyrimidine dehydrogenase family. In terms of tissue distribution, expressed in roots, leaves, stems, siliques and flowers. Highly expressed ion dry seeds.

It localises to the plastid. The protein resides in the chloroplast. The enzyme catalyses 5,6-dihydrouracil + NADP(+) = uracil + NADPH + H(+). Its pathway is amino-acid biosynthesis; beta-alanine biosynthesis. In terms of biological role, involved in pyrimidine base degradation. Catalyzes the reduction of uracil to 5,6-dihydrouracil (DHU) by using NADH as a specific cosubstrate and the reduction of thymine to 5,6-dihydrothymine (DHT). Involved in the recycling of nitrogen from nucleobases to general nitrogen metabolism. In Arabidopsis thaliana (Mouse-ear cress), this protein is Dihydropyrimidine dehydrogenase (NADP(+)), chloroplastic.